A 294-amino-acid polypeptide reads, in one-letter code: Bifunctional protein FolD (294 aa).

NADP(+)-binding positions include 175–177 and Ile-243; that span reads GVS.

The protein belongs to the tetrahydrofolate dehydrogenase/cyclohydrolase family. Homodimer.

It catalyses the reaction (6R)-5,10-methylene-5,6,7,8-tetrahydrofolate + NADP(+) = (6R)-5,10-methenyltetrahydrofolate + NADPH. The enzyme catalyses (6R)-5,10-methenyltetrahydrofolate + H2O = (6R)-10-formyltetrahydrofolate + H(+). Its pathway is one-carbon metabolism; tetrahydrofolate interconversion. Functionally, catalyzes the oxidation of 5,10-methylenetetrahydrofolate to 5,10-methenyltetrahydrofolate and then the hydrolysis of 5,10-methenyltetrahydrofolate to 10-formyltetrahydrofolate. This Xanthomonas campestris pv. campestris (strain 8004) protein is Bifunctional protein FolD.